We begin with the raw amino-acid sequence, 108 residues long: Beta-defensin 126 (108 aa).

The N-terminal stretch at 1 to 20 (MKSLLFTLAVFMLLAQLVSG) is a signal peptide. The interval 21–63 (NWYVKKCLNDVGICKKKCKPGEMHIKNGWATCGKQRDCCVPAD) is in vitro binds to LPS, mediates antimicrobial activity and inhibits LPS-mediated inflammation. Intrachain disulfides connect Cys-27-Cys-58, Cys-34-Cys-52, and Cys-38-Cys-59.

Belongs to the beta-defensin family. In terms of assembly, homodimer or homooligomer; disulfide-linked. O-glycosylated; glycans contain alpha(2,3)-linked sialic acids.

Its subcellular location is the secreted. Functionally, highly glycosylated atypical beta-defensin involved in several aspects of sperm function. Facilitates sperm transport in the female reproductive tract and contributes to sperm protection against immunodetection; both functions are probably implicating the negative surface charge provided by its O-linked oligosaccharides in the sperm glycocalyx. Involved in binding of sperm to oviductal epithelial cells to form a sperm reservoir until ovulation. Release from the sperm surface during capacitation and ovaluation by an elevation of oviductal fluid pH is unmasking other surface components and allows sperm to penetrate the cumulus matrix and bind to the zona pellucida of the oocyte. In vitro has antimicrobial activity and may inhibit LPS-mediated inflammation. The chain is Beta-defensin 126 (DEFB126) from Pan troglodytes (Chimpanzee).